A 300-amino-acid polypeptide reads, in one-letter code: Cation-efflux pump FieF (300 aa).

Helical transmembrane passes span 12-32 (AALA…VAWY), 40-60 (LAAL…LLVV), 82-102 (AALA…LTGF), and 114-134 (PGVG…LVTY). 2 residues coordinate Zn(2+): aspartate 45 and aspartate 49. Zn(2+) is bound by residues histidine 153 and aspartate 157. Transmembrane regions (helical) follow at residues 155 to 175 (QSDV…WYGF) and 178 to 198 (ADAL…LRMG).

The protein belongs to the cation diffusion facilitator (CDF) transporter (TC 2.A.4) family. FieF subfamily. As to quaternary structure, homodimer.

The protein resides in the cell inner membrane. The catalysed reaction is Zn(2+)(in) + H(+)(out) = Zn(2+)(out) + H(+)(in). It catalyses the reaction Cd(2+)(in) + H(+)(out) = Cd(2+)(out) + H(+)(in). It carries out the reaction Fe(2+)(in) + H(+)(out) = Fe(2+)(out) + H(+)(in). Functionally, divalent metal cation transporter which exports Zn(2+), Cd(2+) and possibly Fe(2+). May be involved in zinc and iron detoxification by efflux. In Serratia proteamaculans (strain 568), this protein is Cation-efflux pump FieF.